The following is a 288-amino-acid chain: Phytanoyl-CoA dioxygenase domain-containing protein 1 homolog (288 aa).

Residues Lys95, Met134, 149–151, and Trp167 contribute to the 2-oxoglutarate site; that span reads HVD. Residues His149 and Asp151 each coordinate Fe cation. Residue His242 coordinates Fe cation. The 2-oxoglutarate site is built by Ser244 and Arg253.

This sequence belongs to the PhyH family. PHYHD1 subfamily. Requires Fe cation as cofactor.

Functionally, has alpha-ketoglutarate-dependent dioxygenase activity. Does not show detectable activity towards fatty acid CoA thioesters. Is not expected to be active with phytanoyl CoA. This chain is Phytanoyl-CoA dioxygenase domain-containing protein 1 homolog, found in Caenorhabditis elegans.